The following is a 181-amino-acid chain: Ribonuclease HII (181 aa).

In terms of domain architecture, RNase H type-2 spans 1–181 (MICGIDEVGR…SLHRKNFKLI (181 aa)). A divalent metal cation-binding residues include aspartate 6, glutamate 7, and aspartate 98.

It belongs to the RNase HII family. The cofactor is Mn(2+). It depends on Mg(2+) as a cofactor.

The protein localises to the cytoplasm. It catalyses the reaction Endonucleolytic cleavage to 5'-phosphomonoester.. Its function is as follows. Endonuclease that specifically degrades the RNA of RNA-DNA hybrids. This chain is Ribonuclease HII, found in Borreliella afzelii (strain PKo) (Borrelia afzelii).